Consider the following 93-residue polypeptide: Small ribosomal subunit protein uS19 (93 aa).

The protein belongs to the universal ribosomal protein uS19 family.

Protein S19 forms a complex with S13 that binds strongly to the 16S ribosomal RNA. This Frankia alni (strain DSM 45986 / CECT 9034 / ACN14a) protein is Small ribosomal subunit protein uS19.